The following is a 425-amino-acid chain: Trigger factor (425 aa).

A PPIase FKBP-type domain is found at 158–231 (GDLVRISMEV…VQEVYRRTLP (74 aa)).

The protein belongs to the FKBP-type PPIase family. Tig subfamily.

The protein resides in the cytoplasm. The enzyme catalyses [protein]-peptidylproline (omega=180) = [protein]-peptidylproline (omega=0). In terms of biological role, involved in protein export. Acts as a chaperone by maintaining the newly synthesized protein in an open conformation. Functions as a peptidyl-prolyl cis-trans isomerase. The sequence is that of Trigger factor from Thermotoga neapolitana (strain ATCC 49049 / DSM 4359 / NBRC 107923 / NS-E).